A 555-amino-acid chain; its full sequence is Alpha-1,2-mannosyltransferase ALG9 (555 aa).

At 1–7 (MNCKAVT) the chain is on the cytoplasmic side. Residues 8–28 (ISLLLLLFLTRVYIQPTFSLI) traverse the membrane as a helical segment. Residues 29–62 (SDCDETFNYWEPLNLLVRGFGKQTWEYSPEYSIR) are Lumenal-facing. A helical membrane pass occupies residues 63–83 (SWAFLLPFYCILYPVNKFTDL). Topologically, residues 84 to 86 (ESH) are cytoplasmic. The chain crosses the membrane as a helical span at residues 87-107 (WNFFITRACLGFFSFIMEFKL). At 108–113 (HREIAG) the chain is on the lumenal side. The helical transmembrane segment at 114–134 (SLALQIANIWIIFQLFNPGWF) threads the bilayer. At 135–176 (HASVELLPSAVAMLLYVGATRHSLRYLSTGSTSNFTKSLAYN) the chain is on the cytoplasmic side. A helical transmembrane segment spans residues 177–197 (FLASILGWPFVLILSLPLCLH). The Lumenal segment spans residues 198–213 (YLFNHRIISTIRTAFD). The chain crosses the membrane as a helical span at residues 214–234 (CCLIFSLTAFAVIVTDSIFYG). At 235-268 (KLAPVSWNILFYNVINASEESGPNIFGVEPWYYY) the chain is on the cytoplasmic side. A helical transmembrane segment spans residues 269-289 (PLNLLLNFPLPVLVLAILGIF). Over 290–316 (HLRLWPLWASLFTWIAVFTQQPHKEER) the chain is Lumenal. A helical transmembrane segment spans residues 317–337 (FLYPIYGLITLSASIAFYKVL). The Cytoplasmic portion of the chain corresponds to 338-349 (NLFNRKPILKKG). The chain crosses the membrane as a helical span at residues 350–370 (IKLSVLLIVAGQAMSRIVALV). Topologically, residues 371-555 (NNYTAPIAVY…LFEKPTETTN (185 aa)) are lumenal.

Belongs to the glycosyltransferase 22 family.

The protein resides in the endoplasmic reticulum membrane. The enzyme catalyses an alpha-D-Man-(1-&gt;2)-alpha-D-Man-(1-&gt;2)-alpha-D-Man-(1-&gt;3)-[alpha-D-Man-(1-&gt;3)-alpha-D-Man-(1-&gt;6)]-beta-D-Man-(1-&gt;4)-beta-D-GlcNAc-(1-&gt;4)-alpha-D-GlcNAc-diphospho-di-trans,poly-cis-dolichol + a di-trans,poly-cis-dolichyl beta-D-mannosyl phosphate = an alpha-D-Man-(1-&gt;2)-alpha-D-Man-(1-&gt;2)-alpha-D-Man-(1-&gt;3)-[alpha-D-Man-(1-&gt;2)-alpha-D-Man-(1-&gt;3)-alpha-D-Man-(1-&gt;6)]-beta-D-Man-(1-&gt;4)-beta-D-GlcNAc-(1-&gt;4)-alpha-D-GlcNAc-diphospho-di-trans,poly-cis-dolichol + a di-trans,poly-cis-dolichyl phosphate + H(+). The catalysed reaction is an alpha-D-Man-(1-&gt;2)-alpha-D-Man-(1-&gt;2)-alpha-D-Man-(1-&gt;3)-[alpha-D-Man-(1-&gt;2)-alpha-D-Man-(1-&gt;3)-[alpha-D-Man-(1-&gt;6)]-alpha-D-Man-(1-&gt;6)]-beta-D-Man-(1-&gt;4)-beta-D-GlcNAc-(1-&gt;4)-alpha-D-GlcNAc-diphospho-di-trans,poly-cis-dolichol + a di-trans,poly-cis-dolichyl beta-D-mannosyl phosphate = an alpha-D-Man-(1-&gt;2)-alpha-D-Man-(1-&gt;2)-alpha-D-Man-(1-&gt;3)-[alpha-D-Man-(1-&gt;2)-alpha-D-Man-(1-&gt;3)-[alpha-D-Man-(1-&gt;2)-alpha-D-Man-(1-&gt;6)]-alpha-D-Man-(1-&gt;6)]-beta-D-Man-(1-&gt;4)-beta-D-GlcNAc-(1-&gt;4)-alpha-D-GlcNAc-diphospho-di-trans,poly-cis-dolichol + a di-trans,poly-cis-dolichyl phosphate + H(+). Its pathway is protein modification; protein glycosylation. Functionally, mannosyltransferase that operates in the biosynthetic pathway of dolichol-linked oligosaccharides, the glycan precursors employed in protein asparagine (N)-glycosylation. The assembly of dolichol-linked oligosaccharides begins on the cytosolic side of the endoplasmic reticulum membrane and finishes in its lumen. The sequential addition of sugars to dolichol pyrophosphate produces dolichol-linked oligosaccharides containing fourteen sugars, including two GlcNAcs, nine mannoses and three glucoses. Once assembled, the oligosaccharide is transferred from the lipid to nascent proteins by oligosaccharyltransferases. In the lumen of the endoplasmic reticulum, catalyzes the addition of the seventh and ninth alpha-1,2-linked mannose residues to Man(6)GlcNAc(2)-PP-dolichol and Man(8)GlcNAc(2)-PP-dolichol respectively. The chain is Alpha-1,2-mannosyltransferase ALG9 (ALG9) from Saccharomyces cerevisiae (strain ATCC 204508 / S288c) (Baker's yeast).